We begin with the raw amino-acid sequence, 408 residues long: UPF0761 membrane protein azo3165 (408 aa).

7 consecutive transmembrane segments (helical) span residues L29–G49, L92–E112, I131–A151, I172–A192, P197–M217, G220–A240, and L241–I261.

Belongs to the UPF0761 family.

It is found in the cell inner membrane. In Azoarcus sp. (strain BH72), this protein is UPF0761 membrane protein azo3165.